The chain runs to 786 residues: Endonuclease MutS2 (786 aa).

335–342 (GPNTGGKT) provides a ligand contact to ATP. The Smr domain occupies 711-786 (LDLRGERFEN…GLGVTVVELK (76 aa)).

The protein belongs to the DNA mismatch repair MutS family. MutS2 subfamily. Homodimer. Binds to stalled ribosomes, contacting rRNA.

Endonuclease that is involved in the suppression of homologous recombination and thus may have a key role in the control of bacterial genetic diversity. In terms of biological role, acts as a ribosome collision sensor, splitting the ribosome into its 2 subunits. Detects stalled/collided 70S ribosomes which it binds and splits by an ATP-hydrolysis driven conformational change. Acts upstream of the ribosome quality control system (RQC), a ribosome-associated complex that mediates the extraction of incompletely synthesized nascent chains from stalled ribosomes and their subsequent degradation. Probably generates substrates for RQC. In Bacillus cereus (strain B4264), this protein is Endonuclease MutS2.